Consider the following 658-residue polypeptide: Glycogen debranching enzyme (658 aa).

The active-site Nucleophile is aspartate 336. Glutamate 371 acts as the Proton donor in catalysis.

It belongs to the glycosyl hydrolase 13 family.

The catalysed reaction is Hydrolysis of (1-&gt;6)-alpha-D-glucosidic linkages to branches with degrees of polymerization of three or four glucose residues in limit dextrin.. It participates in glycan degradation; glycogen degradation. Its function is as follows. Removes maltotriose and maltotetraose chains that are attached by 1,6-alpha-linkage to the limit dextrin main chain, generating a debranched limit dextrin. This is Glycogen debranching enzyme from Klebsiella pneumoniae (strain 342).